A 466-amino-acid polypeptide reads, in one-letter code: Ribosome biogenesis protein YTM1 (466 aa).

The tract at residues 8–95 is ubiquitin-like (UBL) domain; the sequence is IKINFFTNEE…EASLNLEYTR (88 aa). The tract at residues 105 to 466 is sufficient for interaction with ERB1 and association with 66S pre-ribosomes; sequence SFNNDDWISS…QINKGSDITK (362 aa). WD repeat units follow at residues 120-159, 161-199, 214-253, 291-331, 333-372, 381-421, and 431-466; these read PLSA…EKQY, GHSG…NIED, GHKA…MTTI, GHSQ…CVDT, TTGY…TTTE, GHTN…SLYT, and KGQD…DITK.

It belongs to the WD repeat WDR12/YTM1 family. Component of the NOP7 complex, composed of ERB1, NOP7 and YTM1. The complex is held together by ERB1, which interacts with NOP7 via its N-terminal domain and with YTM1 via a high-affinity interaction between the seven-bladed beta-propeller domains of the 2 proteins. The NOP7 complex associates with the 66S pre-ribosome. Interacts (via UBL domain) with MDN1 (via VWFA/MIDAS domain).

It is found in the nucleus. The protein resides in the nucleolus. The protein localises to the nucleoplasm. In terms of biological role, component of the NOP7 complex, which is required for maturation of the 25S and 5.8S ribosomal RNAs and formation of the 60S ribosome. This chain is Ribosome biogenesis protein YTM1, found in Debaryomyces hansenii (strain ATCC 36239 / CBS 767 / BCRC 21394 / JCM 1990 / NBRC 0083 / IGC 2968) (Yeast).